The following is a 305-amino-acid chain: Ribosomal protein L11 methyltransferase (305 aa).

Residues Thr-152, Gly-173, Asp-195, and Asn-237 each coordinate S-adenosyl-L-methionine.

The protein belongs to the methyltransferase superfamily. PrmA family.

Its subcellular location is the cytoplasm. The enzyme catalyses L-lysyl-[protein] + 3 S-adenosyl-L-methionine = N(6),N(6),N(6)-trimethyl-L-lysyl-[protein] + 3 S-adenosyl-L-homocysteine + 3 H(+). Functionally, methylates ribosomal protein L11. This is Ribosomal protein L11 methyltransferase from Hamiltonella defensa subsp. Acyrthosiphon pisum (strain 5AT).